The chain runs to 746 residues: Polyribonucleotide nucleotidyltransferase (746 aa).

Asp-520 and Asp-526 together coordinate Mg(2+). The region spanning 586-648 (PRIITVKVPV…EAARAAVNAI (63 aa)) is the KH domain. One can recognise an S1 motif domain in the interval 657–729 (GERYLGTVVK…PRGKLSLVPV (73 aa)).

This sequence belongs to the polyribonucleotide nucleotidyltransferase family. The cofactor is Mg(2+).

The protein resides in the cytoplasm. It catalyses the reaction RNA(n+1) + phosphate = RNA(n) + a ribonucleoside 5'-diphosphate. Functionally, involved in mRNA degradation. Catalyzes the phosphorolysis of single-stranded polyribonucleotides processively in the 3'- to 5'-direction. The chain is Polyribonucleotide nucleotidyltransferase from Kineococcus radiotolerans (strain ATCC BAA-149 / DSM 14245 / SRS30216).